Consider the following 584-residue polypeptide: Delta 8-(E)-sphingolipid desaturase (584 aa).

Positions 7–82 (KKIFTRSQII…FTRFKIGEIE (76 aa)) constitute a Cytochrome b5 heme-binding domain. Residues His42 and His65 each contribute to the heme site. The tract at residues 109–134 (NKNTSNKKTLDSKLDNDSSNSTSDLE) is disordered. Residues 261–281 (LFLYSLSFLKINQLFLSAVFM) form a helical membrane-spanning segment. The Histidine box-1 signature appears at 293-297 (HDAGH). Residues 306-326 (IDNIFGMLIADWFGGLSLGWW) form a helical membrane-spanning segment. Residues 330 to 334 (HNVHH) carry the Histidine box-2 motif. Helical transmembrane passes span 386–403 (YLYYPILCFGRFNLYRLS), 423–443 (YFEFFGLSFFFYWFFYLLVFK), and 455–475 (VMVSHITTMLVHVQITLSHFA). The short motif at 514–518 (QAIHH) is the Histidine box-3 element.

It belongs to the fatty acid desaturase type 1 family.

Its subcellular location is the membrane. It catalyses the reaction an N-acylsphing-4-enine + 2 Fe(II)-[cytochrome b5] + O2 + 2 H(+) = a (4E,8E)-4-sphinga-4,8-dienine ceramide + 2 Fe(III)-[cytochrome b5] + 2 H2O. The protein operates within lipid metabolism; sphingolipid metabolism. Functionally, delta(8)-fatty-acid desaturase which introduces a double bond at the 8-position in the long-chain base (LCB) of ceramides. Required for the formation of the di-unsaturated sphingoid base (E,E)-sphinga-4,8-dienine during glucosylceramide (GluCer) biosynthesis. This chain is Delta 8-(E)-sphingolipid desaturase, found in Candida albicans (strain SC5314 / ATCC MYA-2876) (Yeast).